The chain runs to 114 residues: MGPQLLGYVVLCLLGAGPLEAQVTQNPRYLITVTGKKLTVTCSQNMNHEYMSWYRQDPGLGLRQIYYSMNVEVTDKGDVPEGYKVSRKEKRNFPLILESPSPNQTSLYFCASSL.

Residues 1–21 (MGPQLLGYVVLCLLGAGPLEA) form the signal peptide. The 93-residue stretch at 22-114 (QVTQNPRYLI…TSLYFCASSL (93 aa)) folds into the Ig-like domain. The cysteines at positions 42 and 110 are disulfide-linked. Asparagine 103 is a glycosylation site (N-linked (GlcNAc...) asparagine).

In terms of assembly, alpha-beta TR is a heterodimer composed of an alpha and beta chain; disulfide-linked. The alpha-beta TR is associated with the transmembrane signaling CD3 coreceptor proteins to form the TR-CD3 (TcR or TCR). The assembly of alpha-beta TR heterodimers with CD3 occurs in the endoplasmic reticulum where a single alpha-beta TR heterodimer associates with one CD3D-CD3E heterodimer, one CD3G-CD3E heterodimer and one CD247 homodimer forming a stable octameric structure. CD3D-CD3E and CD3G-CD3E heterodimers preferentially associate with TR alpha and TR beta chains, respectively. The association of the CD247 homodimer is the last step of TcR assembly in the endoplasmic reticulum and is required for transport to the cell surface.

It localises to the cell membrane. Functionally, v region of the variable domain of T cell receptor (TR) beta chain that participates in the antigen recognition. Alpha-beta T cell receptors are antigen specific receptors which are essential to the immune response and are present on the cell surface of T lymphocytes. Recognize peptide-major histocompatibility (MH) (pMH) complexes that are displayed by antigen presenting cells (APC), a prerequisite for efficient T cell adaptive immunity against pathogens. Binding of alpha-beta TR to pMH complex initiates TR-CD3 clustering on the cell surface and intracellular activation of LCK that phosphorylates the ITAM motifs of CD3G, CD3D, CD3E and CD247 enabling the recruitment of ZAP70. In turn ZAP70 phosphorylates LAT, which recruits numerous signaling molecules to form the LAT signalosome. The LAT signalosome propagates signal branching to three major signaling pathways, the calcium, the mitogen-activated protein kinase (MAPK) kinase and the nuclear factor NF-kappa-B (NF-kB) pathways, leading to the mobilization of transcription factors that are critical for gene expression and essential for T cell growth and differentiation. The T cell repertoire is generated in the thymus, by V-(D)-J rearrangement. This repertoire is then shaped by intrathymic selection events to generate a peripheral T cell pool of self-MH restricted, non-autoaggressive T cells. Post-thymic interaction of alpha-beta TR with the pMH complexes shapes TR structural and functional avidity. The polypeptide is T cell receptor beta variable 27 (Homo sapiens (Human)).